Consider the following 427-residue polypeptide: GPI mannosyltransferase 2 (427 aa).

8 consecutive transmembrane segments (helical) span residues 7 to 27 (LTTVFFTVKLVQYLLVYFAPG), 119 to 139 (ATLLNLVLHYVSVWLLYALTL), 164 to 184 (FLLAPYSEPLSFAFSFLGMLL), 197 to 217 (ITLAWYNWLPYTLSGICFSVA), 247 to 267 (AVLFPCIAGSMMLGIFAYMHY), 318 to 338 (VPNFLFALPNLVILWYSTVYF), 350 to 370 (LVYITRALLLIITFFAHVQII), and 404 to 424 (LYVNWLILWIPLQTVLFACFL).

Belongs to the PIGV family.

The protein resides in the endoplasmic reticulum membrane. It participates in glycolipid biosynthesis; glycosylphosphatidylinositol-anchor biosynthesis. Mannosyltransferase involved in glycosylphosphatidylinositol-anchor biosynthesis. Transfers the second mannose to the glycosylphosphatidylinositol during GPI precursor assembly. This is GPI mannosyltransferase 2 (GPI18) from Eremothecium gossypii (strain ATCC 10895 / CBS 109.51 / FGSC 9923 / NRRL Y-1056) (Yeast).